A 430-amino-acid chain; its full sequence is Histidine--tRNA ligase (430 aa).

Belongs to the class-II aminoacyl-tRNA synthetase family. Homodimer.

Its subcellular location is the cytoplasm. The enzyme catalyses tRNA(His) + L-histidine + ATP = L-histidyl-tRNA(His) + AMP + diphosphate + H(+). The protein is Histidine--tRNA ligase of Acaryochloris marina (strain MBIC 11017).